The sequence spans 338 residues: Taste receptor type 2 member 39 (338 aa).

Residues 1-30 (MLGRCFPPNTKEKQQLRMIKLCDPAESELS) lie on the Extracellular side of the membrane. A helical transmembrane segment spans residues 31–51 (PFLITLTLAVLLAEYLTGIIA). Over 52 to 74 (NGFITAIHAAECVQNKSVSTSGR) the chain is Cytoplasmic. A helical transmembrane segment spans residues 75-95 (ILVFLSVSRIALQSLMMLEIT). At 96–116 (ISSTSLSFYSEDTVYYAFKIS) the chain is on the extracellular side. A helical transmembrane segment spans residues 117 to 137 (FIFLNFCSLWFAAWLSFFYFV). Over 138-156 (KIANFSYPLFLKLRWRISG) the chain is Cytoplasmic. Residues 157-177 (LIPWLLWLSVFISFSHSMFCI) traverse the membrane as a helical segment. The Extracellular portion of the chain corresponds to 178-205 (NICTGYCDNSFPIHSSNSTEKTYFSEIS). Asparagine 194 is a glycosylation site (N-linked (GlcNAc...) asparagine). Residues 206–226 (VVSLAFFFNLGIVIPLIMFIL) traverse the membrane as a helical segment. Residues 227 to 262 (AAILLILSLKRHTLYMXSNATGSKDPSMEAHIGAIK) lie on the Cytoplasmic side of the membrane. Residues 263–283 (ATSYFLILYIFNAVALFIYLS) traverse the membrane as a helical segment. At 284–291 (NMFDINSL) the chain is on the extracellular side. The helical transmembrane segment at 292-312 (WNTLCQIIMAAYPASHSILLI) threads the bilayer. Residues 313–338 (KDNPGLRRAWKQLQHRLHLYPKEWTL) lie on the Cytoplasmic side of the membrane.

This sequence belongs to the G-protein coupled receptor T2R family.

The protein resides in the membrane. Functionally, receptor that may play a role in the perception of bitterness and is gustducin-linked. May play a role in sensing the chemical composition of the gastrointestinal content. The activity of this receptor may stimulate alpha gustducin, mediate PLC-beta-2 activation and lead to the gating of TRPM5. This is Taste receptor type 2 member 39 (TAS2R39) from Papio hamadryas (Hamadryas baboon).